Reading from the N-terminus, the 320-residue chain is Aspartate carbamoyltransferase catalytic subunit (320 aa).

2 residues coordinate carbamoyl phosphate: Arg68 and Thr69. Lys96 contributes to the L-aspartate binding site. Carbamoyl phosphate-binding residues include Arg118, His148, and Gln151. The L-aspartate site is built by Arg181 and Arg236. Carbamoyl phosphate contacts are provided by Gly277 and Pro278.

Belongs to the aspartate/ornithine carbamoyltransferase superfamily. ATCase family. As to quaternary structure, heterododecamer (2C3:3R2) of six catalytic PyrB chains organized as two trimers (C3), and six regulatory PyrI chains organized as three dimers (R2).

The catalysed reaction is carbamoyl phosphate + L-aspartate = N-carbamoyl-L-aspartate + phosphate + H(+). Its pathway is pyrimidine metabolism; UMP biosynthesis via de novo pathway; (S)-dihydroorotate from bicarbonate: step 2/3. Its function is as follows. Catalyzes the condensation of carbamoyl phosphate and aspartate to form carbamoyl aspartate and inorganic phosphate, the committed step in the de novo pyrimidine nucleotide biosynthesis pathway. This Acidovorax ebreus (strain TPSY) (Diaphorobacter sp. (strain TPSY)) protein is Aspartate carbamoyltransferase catalytic subunit.